The primary structure comprises 438 residues: Adenosylhomocysteinase (438 aa).

Substrate-binding residues include T61, D137, and E162. NAD(+) is bound at residue 163 to 165; that stretch reads TTT. Substrate contacts are provided by K192 and D196. NAD(+) is bound by residues N197, 226 to 231, E249, N284, 305 to 307, and N352; these read GYGDVG and IGH.

It belongs to the adenosylhomocysteinase family. The cofactor is NAD(+).

The protein localises to the cytoplasm. It catalyses the reaction S-adenosyl-L-homocysteine + H2O = L-homocysteine + adenosine. It functions in the pathway amino-acid biosynthesis; L-homocysteine biosynthesis; L-homocysteine from S-adenosyl-L-homocysteine: step 1/1. May play a key role in the regulation of the intracellular concentration of adenosylhomocysteine. The sequence is that of Adenosylhomocysteinase from Christiangramia forsetii (strain DSM 17595 / CGMCC 1.15422 / KT0803) (Gramella forsetii).